Reading from the N-terminus, the 202-residue chain is Dephospho-CoA kinase (202 aa).

The 198-residue stretch at 3–200 (TIGLTGGIGS…QRYLTLAANR (198 aa)) folds into the DPCK domain. 11–16 (GSGKSA) is a binding site for ATP.

It belongs to the CoaE family.

Its subcellular location is the cytoplasm. The enzyme catalyses 3'-dephospho-CoA + ATP = ADP + CoA + H(+). The protein operates within cofactor biosynthesis; coenzyme A biosynthesis; CoA from (R)-pantothenate: step 5/5. Functionally, catalyzes the phosphorylation of the 3'-hydroxyl group of dephosphocoenzyme A to form coenzyme A. The sequence is that of Dephospho-CoA kinase from Thiobacillus denitrificans (strain ATCC 25259 / T1).